Here is a 208-residue protein sequence, read N- to C-terminus: Probable adenylyl-sulfate kinase (208 aa).

Residue 38 to 45 (GLSGSGKS) participates in ATP binding. Serine 112 serves as the catalytic Phosphoserine intermediate.

Belongs to the APS kinase family.

It catalyses the reaction adenosine 5'-phosphosulfate + ATP = 3'-phosphoadenylyl sulfate + ADP + H(+). It participates in sulfur metabolism; hydrogen sulfide biosynthesis; sulfite from sulfate: step 2/3. Functionally, catalyzes the synthesis of activated sulfate. This Halalkalibacterium halodurans (strain ATCC BAA-125 / DSM 18197 / FERM 7344 / JCM 9153 / C-125) (Bacillus halodurans) protein is Probable adenylyl-sulfate kinase.